The primary structure comprises 220 residues: Cell division protein SepF (220 aa).

The disordered stretch occupies residues Met-1–His-120. The segment covering Leu-26–Val-35 has biased composition (basic and acidic residues). Positions Gln-39–Ala-79 are enriched in low complexity. The span at Val-93–Ala-102 shows a compositional bias: basic and acidic residues.

It belongs to the SepF family. In terms of assembly, homodimer. Interacts with FtsZ.

It localises to the cytoplasm. Cell division protein that is part of the divisome complex and is recruited early to the Z-ring. Probably stimulates Z-ring formation, perhaps through the cross-linking of FtsZ protofilaments. Its function overlaps with FtsA. This chain is Cell division protein SepF, found in Streptococcus equi subsp. equi (strain 4047).